A 38-amino-acid chain; its full sequence is Large ribosomal subunit protein bL36 (38 aa).

It belongs to the bacterial ribosomal protein bL36 family.

This is Large ribosomal subunit protein bL36 from Ectopseudomonas mendocina (strain ymp) (Pseudomonas mendocina).